The sequence spans 267 residues: Glucosamine-6-phosphate deaminase (267 aa).

Aspartate 71 (proton acceptor; for enolization step) is an active-site residue. Aspartate 140 serves as the catalytic For ring-opening step. Histidine 142 (proton acceptor; for ring-opening step) is an active-site residue. The active-site For ring-opening step is the glutamate 147.

Belongs to the glucosamine/galactosamine-6-phosphate isomerase family. Homohexamer.

The protein localises to the cytoplasm. The catalysed reaction is alpha-D-glucosamine 6-phosphate + H2O = beta-D-fructose 6-phosphate + NH4(+). Its pathway is nucleotide-sugar biosynthesis; UDP-N-acetyl-alpha-D-glucosamine biosynthesis; alpha-D-glucosamine 6-phosphate from D-fructose 6-phosphate: step 1/1. Catalyzes the reversible conversion of alpha-D-glucosamine 6-phosphate (GlcN-6P) into beta-D-fructose 6-phosphate (Fru-6P) and ammonium ion, a regulatory reaction step in de novo uridine diphosphate-N-acetyl-alpha-D-glucosamine (UDP-GlcNAc) biosynthesis via hexosamine pathway. The polypeptide is Glucosamine-6-phosphate deaminase (Caenorhabditis elegans).